We begin with the raw amino-acid sequence, 180 residues long: Endoribonuclease YbeY (180 aa).

3 residues coordinate Zn(2+): histidine 118, histidine 122, and histidine 128.

It belongs to the endoribonuclease YbeY family. The cofactor is Zn(2+).

Its subcellular location is the cytoplasm. In terms of biological role, single strand-specific metallo-endoribonuclease involved in late-stage 70S ribosome quality control and in maturation of the 3' terminus of the 16S rRNA. The chain is Endoribonuclease YbeY from Rhodococcus erythropolis (strain PR4 / NBRC 100887).